Consider the following 181-residue polypeptide: Protein FAM237A (181 aa).

A signal peptide spans 1–33 (MADPGNRGGIHRPLSFTCSLLIVGMCCVSPFFC). At L113 the chain carries Leucine amide. The propeptide at 114 to 181 (GRRQLVGEEE…GKVNLEIKRK (68 aa)) is removed in the mature form.

The active form requires C-terminal amidation and disulfide bond formation. As to expression, expressed in the pituitary, testis, and heart and at lower levels in the brain.

It is found in the secreted. Functionally, may be capable of activating GPR83 via the GNAQ signaling pathway. In Homo sapiens (Human), this protein is Protein FAM237A.